The following is a 198-amino-acid chain: Holliday junction resolvase RecU (198 aa).

Positions 1–22 are disordered; sequence MVNYPHKLSSQKRQTSLSQPKN. A compositionally biased stretch (polar residues) spans 11–22; that stretch reads QKRQTSLSQPKN. Positions 81, 83, 96, and 115 each coordinate Mg(2+).

This sequence belongs to the RecU family. It depends on Mg(2+) as a cofactor.

The protein localises to the cytoplasm. It catalyses the reaction Endonucleolytic cleavage at a junction such as a reciprocal single-stranded crossover between two homologous DNA duplexes (Holliday junction).. In terms of biological role, endonuclease that resolves Holliday junction intermediates in genetic recombination. Cleaves mobile four-strand junctions by introducing symmetrical nicks in paired strands. Promotes annealing of linear ssDNA with homologous dsDNA. Required for DNA repair, homologous recombination and chromosome segregation. The sequence is that of Holliday junction resolvase RecU from Streptococcus pneumoniae (strain Hungary19A-6).